We begin with the raw amino-acid sequence, 606 residues long: DNA mismatch repair protein MutL (606 aa).

Residues 377–401 (HRPLFAPQPAPQPDREPPLPDSGSR) form a disordered region.

Belongs to the DNA mismatch repair MutL/HexB family.

This protein is involved in the repair of mismatches in DNA. It is required for dam-dependent methyl-directed DNA mismatch repair. May act as a 'molecular matchmaker', a protein that promotes the formation of a stable complex between two or more DNA-binding proteins in an ATP-dependent manner without itself being part of a final effector complex. The sequence is that of DNA mismatch repair protein MutL from Geobacter sulfurreducens (strain ATCC 51573 / DSM 12127 / PCA).